The chain runs to 238 residues: TATA-box-binding protein (238 aa).

The segment at 1–58 (MDLKLPPTNPTNPQQAKTFMKSIEEDEKNKAEDLDIIKKEDIDEPKQEDTTDGNGGGG) is disordered. Residues 27-49 (EKNKAEDLDIIKKEDIDEPKQED) show a composition bias toward basic and acidic residues. 2 tandem repeats follow at residues 65 to 141 (LQNI…ARII) and 155 to 232 (IQNI…YPVL).

The protein belongs to the TBP family. In terms of assembly, belongs to the TFIID complex together with the TBP-associated factors (TAFs). Binds DNA as monomer.

It localises to the nucleus. In terms of biological role, general transcription factor that functions at the core of the DNA-binding multiprotein factor TFIID. Binding of TFIID to the TATA box is the initial transcriptional step of the pre-initiation complex (PIC), playing a role in the activation of eukaryotic genes transcribed by RNA polymerase II. The chain is TATA-box-binding protein (TBP1) from Candida albicans (strain SC5314 / ATCC MYA-2876) (Yeast).